Here is a 435-residue protein sequence, read N- to C-terminus: Uracil permease (435 aa).

A run of 12 helical transmembrane segments spans residues 17 to 37 (FSWV…TILV), 42 to 62 (GMSP…YLLI), 67 to 87 (IPAY…VKAT), 91 to 111 (GAAM…ALLI), 122 to 142 (ILPP…LAST), 161 to 181 (LKHF…AIFL), 191 to 213 (LIGI…QPVL), 234 to 254 (VTLG…SEHI), 311 to 331 (VFSV…GFIG), 336 to 356 (LISS…FGII), 376 to 396 (NLII…IQVS), and 399 to 419 (GFQV…NLIL).

It belongs to the nucleobase:cation symporter-2 (NCS2) (TC 2.A.40) family.

It localises to the cell membrane. Functionally, transport of uracil in the cell. The polypeptide is Uracil permease (pyrP) (Bacillus subtilis (strain 168)).